We begin with the raw amino-acid sequence, 147 residues long: MRLLLLNGPNINLLGQREPGLYGHQTLSDIELRLRDRASEAEVQLETFQSNFEGALVERVHQAMGSVDGILINAGAYTHTSIALRDALLGVAIPFVEVHLSNIHARESFRHHSHLADRALGVVCGFGAFSYDMAFDGLVNHLRGVEA.

The active-site Proton acceptor is the Y22. The substrate site is built by N73, H79, and D86. The Proton donor role is filled by H99. Substrate-binding positions include 100 to 101 and R110; that span reads LS.

Belongs to the type-II 3-dehydroquinase family. Homododecamer.

The enzyme catalyses 3-dehydroquinate = 3-dehydroshikimate + H2O. It functions in the pathway metabolic intermediate biosynthesis; chorismate biosynthesis; chorismate from D-erythrose 4-phosphate and phosphoenolpyruvate: step 3/7. In terms of biological role, catalyzes a trans-dehydration via an enolate intermediate. This Synechococcus sp. (strain WH7803) protein is 3-dehydroquinate dehydratase.